The sequence spans 449 residues: Nucleoporin NUP42 (449 aa).

The C3H1-type zinc-finger motif lies at 1 to 25 (MAICSFFLQGRCRYGEKCWNEHPRG). Disordered stretches follow at residues 22–84 (HPRG…GFDN) and 218–237 (DMTS…SSFP). Composition is skewed to polar residues over residues 47 to 83 (WGSS…SGFD) and 218 to 227 (DMTSGYNGQQ). FG repeat units follow at residues 231–232 (FG), 274–275 (FG), 284–285 (FG), 305–306 (FG), 314–315 (FG), 335–336 (FG), and 347–348 (FG).

As to quaternary structure, probable component of the nuclear pore complex (NPC).

The protein localises to the nucleus. It localises to the nuclear pore complex. Its subcellular location is the nucleus membrane. Functionally, required for the export of mRNAs containing poly(A) tails from the nucleus into the cytoplasm. This chain is Nucleoporin NUP42 (nup42), found in Xenopus tropicalis (Western clawed frog).